The chain runs to 547 residues: Membrane protein insertase YidC (547 aa).

Transmembrane regions (helical) follow at residues 6–26 (LILV…WQKY), 328–348 (VVDY…LEAI), 351–371 (LVGN…AVFF), 425–445 (LPIL…LGAV), 459–479 (LASA…MFVQ), and 499–519 (PLIF…YWVV).

Belongs to the OXA1/ALB3/YidC family. Type 1 subfamily. As to quaternary structure, interacts with the Sec translocase complex via SecD. Specifically interacts with transmembrane segments of nascent integral membrane proteins during membrane integration.

The protein resides in the cell inner membrane. Functionally, required for the insertion and/or proper folding and/or complex formation of integral membrane proteins into the membrane. Involved in integration of membrane proteins that insert both dependently and independently of the Sec translocase complex, as well as at least some lipoproteins. Aids folding of multispanning membrane proteins. This is Membrane protein insertase YidC from Dechloromonas aromatica (strain RCB).